Reading from the N-terminus, the 520-residue chain is GMP synthase [glutamine-hydrolyzing] (520 aa).

In terms of domain architecture, Glutamine amidotransferase type-1 spans 9-202 (KILILDFGSQ…VRAICGCTGH (194 aa)). Catalysis depends on Cys-86, which acts as the Nucleophile. Catalysis depends on residues His-176 and Glu-178. A GMPS ATP-PPase domain is found at 203–395 (WTPGQIIEDA…LGLPHQMVWR (193 aa)). 230–236 (SGGVDSS) contacts ATP.

In terms of assembly, homodimer.

It carries out the reaction XMP + L-glutamine + ATP + H2O = GMP + L-glutamate + AMP + diphosphate + 2 H(+). It participates in purine metabolism; GMP biosynthesis; GMP from XMP (L-Gln route): step 1/1. Functionally, catalyzes the synthesis of GMP from XMP. This Pelobacter propionicus (strain DSM 2379 / NBRC 103807 / OttBd1) protein is GMP synthase [glutamine-hydrolyzing].